Reading from the N-terminus, the 73-residue chain is Neurogranin (73 aa).

The region spanning 26–55 (ANAAAAKIQASFRGHMTRKKIKGGEIDRKT) is the IQ domain. At S36 the chain carries Phosphoserine; by PKC. A compositionally biased stretch (basic and acidic residues) spans 47–59 (KGGEIDRKTKDAE). The disordered stretch occupies residues 47–73 (KGGEIDRKTKDAECANSTRGGDLRNGD).

This sequence belongs to the neurogranin family.

In terms of biological role, acts as a 'third messenger' substrate of protein kinase C-mediated molecular cascades during synaptic development and remodeling. Binds to calmodulin in the absence of calcium. This Serinus canaria (Island canary) protein is Neurogranin (NRGN).